A 218-amino-acid polypeptide reads, in one-letter code: MERSFTLAPSLLSADFSALDRALVYLEAHGAQWVHLDVMDGHFVPNLTFGAPVLRCLRSKTHLPFDVHLMVSRPADLIEDFVQAGADFLTFHIEAEVHAHRLIHAIRGRGVKVGISLVPSTPVAALSEVLPFVDLVLVMTVNPGFSGQQMIAHCLSKVSALVQMRTERGYSYMISVDGGIDCRTLPQALDAGADVIVSGSAFFSGTLRSLLCKDSSGA.

A substrate-binding site is contributed by Ser-10. The a divalent metal cation site is built by His-35, Asp-37, and His-68. The active-site Proton acceptor is the Asp-37. Substrate-binding positions include His-68, 144 to 147 (GFSG), 177 to 179 (DGG), and 199 to 200 (GS). Asp-177 contacts a divalent metal cation. Asp-177 functions as the Proton donor in the catalytic mechanism.

Belongs to the ribulose-phosphate 3-epimerase family. A divalent metal cation serves as cofactor.

It catalyses the reaction D-ribulose 5-phosphate = D-xylulose 5-phosphate. It participates in carbohydrate degradation. Catalyzes the reversible epimerization of D-ribulose 5-phosphate to D-xylulose 5-phosphate. This is Ribulose-phosphate 3-epimerase from Treponema pallidum (strain Nichols).